Consider the following 273-residue polypeptide: Large ribosomal subunit protein uL2cz/uL2cy (273 aa).

2 disordered regions span residues 1-20 (MAKH…TIDR) and 225-273 (PVDH…RRRK).

Belongs to the universal ribosomal protein uL2 family. Part of the 50S ribosomal subunit.

It localises to the plastid. It is found in the chloroplast. The protein is Large ribosomal subunit protein uL2cz/uL2cy (rpl2-A) of Oryza nivara (Indian wild rice).